The chain runs to 264 residues: Small ribosomal subunit protein uS2 (264 aa).

It belongs to the universal ribosomal protein uS2 family.

The sequence is that of Small ribosomal subunit protein uS2 from Helicobacter pylori (strain Shi470).